A 348-amino-acid chain; its full sequence is Dihydroorotase (348 aa).

H17 and H19 together coordinate Zn(2+). Residues 19–21 and N45 each bind substrate; that span reads HLR. The Zn(2+) site is built by K103, H140, and H178. K103 is subject to N6-carboxylysine. Substrate is bound at residue H140. Residue L223 coordinates substrate. Position 251 (D251) interacts with Zn(2+). The active site involves D251. Residues H255 and A267 each contribute to the substrate site.

This sequence belongs to the metallo-dependent hydrolases superfamily. DHOase family. Class II DHOase subfamily. Homodimer. The cofactor is Zn(2+).

It catalyses the reaction (S)-dihydroorotate + H2O = N-carbamoyl-L-aspartate + H(+). The protein operates within pyrimidine metabolism; UMP biosynthesis via de novo pathway; (S)-dihydroorotate from bicarbonate: step 3/3. In terms of biological role, catalyzes the reversible cyclization of carbamoyl aspartate to dihydroorotate. The protein is Dihydroorotase of Salmonella paratyphi A (strain ATCC 9150 / SARB42).